Here is a 179-residue protein sequence, read N- to C-terminus: Large ribosomal subunit protein uL6c (179 aa).

It belongs to the universal ribosomal protein uL6 family. In terms of assembly, part of the 50S ribosomal subunit.

It localises to the plastid. The protein resides in the chloroplast. Its function is as follows. Binds 23S rRNA. In Trieres chinensis (Marine centric diatom), this protein is Large ribosomal subunit protein uL6c (rpl6).